A 508-amino-acid chain; its full sequence is ATP synthase subunit alpha (508 aa).

Residue 170–177 participates in ATP binding; the sequence is GDRQTGKT.

Belongs to the ATPase alpha/beta chains family. In terms of assembly, F-type ATPases have 2 components, CF(1) - the catalytic core - and CF(0) - the membrane proton channel. CF(1) has five subunits: alpha(3), beta(3), gamma(1), delta(1), epsilon(1). CF(0) has three main subunits: a(1), b(2) and c(9-12). The alpha and beta chains form an alternating ring which encloses part of the gamma chain. CF(1) is attached to CF(0) by a central stalk formed by the gamma and epsilon chains, while a peripheral stalk is formed by the delta and b chains.

The protein resides in the cell inner membrane. It catalyses the reaction ATP + H2O + 4 H(+)(in) = ADP + phosphate + 5 H(+)(out). Its function is as follows. Produces ATP from ADP in the presence of a proton gradient across the membrane. The alpha chain is a regulatory subunit. The protein is ATP synthase subunit alpha of Dictyoglomus turgidum (strain DSM 6724 / Z-1310).